A 103-amino-acid polypeptide reads, in one-letter code: Large ribosomal subunit protein bL21 (103 aa).

It belongs to the bacterial ribosomal protein bL21 family. As to quaternary structure, part of the 50S ribosomal subunit. Contacts protein L20.

This protein binds to 23S rRNA in the presence of protein L20. In Shewanella sediminis (strain HAW-EB3), this protein is Large ribosomal subunit protein bL21.